Reading from the N-terminus, the 310-residue chain is Junctional adhesion molecule C (310 aa).

An N-terminal signal peptide occupies residues 1–31 (MALRRPPRLRLCARLPDFFLLLLFRGCLIGA). Residues 32–241 (VNLKSSNRTP…EQEMEVYDLN (210 aa)) are Extracellular-facing. Positions 35–127 (KSSNRTPVVQ…VARNDRKEID (93 aa)) constitute an Ig-like V-type domain. 2 cysteine pairs are disulfide-bonded: C53-C115 and C160-C219. N-linked (GlcNAc...) asparagine glycosylation is found at N104 and N192. Residues 139–236 (PVTPVCRVPK…SARCEEQEME (98 aa)) form the Ig-like C2-type domain. A helical transmembrane segment spans residues 242–262 (IGGIIGGVLVVLAVLALITLG). Residues 263 to 310 (ICCAYRRGYFINNKQDGESYKNPGKPDGVNYIRTDEEGDFRHKSSFVI) are Cytoplasmic-facing. Residues C264 and C265 are each lipidated (S-palmitoyl cysteine).

It belongs to the immunoglobulin superfamily. In terms of assembly, interacts with ITGAM. Interacts with GORASP2. Post-translationally, proteolytically cleaved from endothelial cells surface into a soluble form by ADAM10 and ADAM17; the release of soluble JAM3 is increased by pro-inflammatory factors. In terms of processing, S-palmitoylated by ZDHHC7. S-palmitoylation promotes expression at tight junctions. As to expression, detected on round and elongated spermatids (at protein level). Highest expression in placenta, brain and kidney. Significant expression is detected on platelets. Expressed in intestinal mucosa cells. Expressed in the vascular endothelium. Found in serum (at protein level). Also detected in the synovial fluid of patients with rheumatoid arthritis, psoriatic arthritis or ostearthritis (at protein level).

It is found in the cell membrane. Its subcellular location is the cell junction. The protein localises to the desmosome. The protein resides in the tight junction. It localises to the secreted. Functionally, junctional adhesion protein that mediates heterotypic cell-cell interactions with its cognate receptor JAM2 to regulate different cellular processes. Plays a role in homing and mobilization of hematopoietic stem and progenitor cells within the bone marrow. At the surface of bone marrow stromal cells, it contributes to the retention of the hematopoietic stem and progenitor cells expressing JAM3. Plays a central role in leukocytes extravasation by facilitating transmigration through the endothelium. Plays a role in spermatogenesis where JAM2 and JAM3, which are respectively expressed by Sertoli and germ cells, mediate an interaction between both cell types and play an essential role in the anchorage of germ cells onto Sertoli cells and the assembly of cell polarity complexes during spermatid differentiation. Also functions as a counter-receptor for ITGAM, mediating leukocyte-platelet interactions and is involved in the regulation of transepithelial migration of polymorphonuclear neutrophils (PMN). Plays a role in angiogenesis. Plays a role in the regulation of cell migration. During myogenesis, it is involved in myocyte fusion. Promotes chemotaxis of vascular endothelial cells and stimulates angiogenesis. The chain is Junctional adhesion molecule C (JAM3) from Homo sapiens (Human).